Here is a 204-residue protein sequence, read N- to C-terminus: Anthranilate synthase component 2 (204 aa).

Residues 3 to 204 (RLVVVDNFDS…LTAVAGFDVA (202 aa)) enclose the Glutamine amidotransferase type-1 domain. 58-60 (GPG) lines the L-glutamine pocket. Cys88 acts as the Nucleophile; for GATase activity in catalysis. Residue 138–139 (SL) coordinates L-glutamine. Catalysis depends on for GATase activity residues His178 and Glu180.

Heterotetramer consisting of two non-identical subunits: a beta subunit (TrpG) and a large alpha subunit (TrpE).

It carries out the reaction chorismate + L-glutamine = anthranilate + pyruvate + L-glutamate + H(+). The protein operates within amino-acid biosynthesis; L-tryptophan biosynthesis; L-tryptophan from chorismate: step 1/5. Its function is as follows. Part of a heterotetrameric complex that catalyzes the two-step biosynthesis of anthranilate, an intermediate in the biosynthesis of L-tryptophan. In the first step, the glutamine-binding beta subunit (TrpG) of anthranilate synthase (AS) provides the glutamine amidotransferase activity which generates ammonia as a substrate that, along with chorismate, is used in the second step, catalyzed by the large alpha subunit of AS (TrpE) to produce anthranilate. In the absence of TrpG, TrpE can synthesize anthranilate directly from chorismate and high concentrations of ammonia. The chain is Anthranilate synthase component 2 (trpG) from Haloferax volcanii (strain ATCC 29605 / DSM 3757 / JCM 8879 / NBRC 14742 / NCIMB 2012 / VKM B-1768 / DS2) (Halobacterium volcanii).